Here is a 1320-residue protein sequence, read N- to C-terminus: Probable inactive ATP-dependent zinc metalloprotease FTSHI 5, chloroplastic (1320 aa).

The N-terminal 43 residues, 1-43 (MDFISASSLSSPFSTQLSPIYLSSGIVSLKPRHRVKNRNFGSR), are a transit peptide targeting the chloroplast. 3 helical membrane-spanning segments follow: residues 571–591 (LYLK…WIPM), 633–653 (NIND…IIPY), and 695–715 (FQWF…LYHV). 824–831 (GERGTGKT) contacts ATP.

In the N-terminal section; belongs to the AAA ATPase family. It in the C-terminal section; belongs to the peptidase M41 family. In terms of assembly, oligomer.

It is found in the plastid. It localises to the chloroplast membrane. Required for plastid development during embryogenesis. Might be involved in chaperone functions or play a structural role in the thylakoid FtsH complex. This is Probable inactive ATP-dependent zinc metalloprotease FTSHI 5, chloroplastic from Arabidopsis thaliana (Mouse-ear cress).